A 350-amino-acid polypeptide reads, in one-letter code: Probable lactoylglutathione lyase, chloroplastic (350 aa).

The N-terminal 61 residues, 1-61 (MVRIIPMAAS…KLLRRSVNCL (61 aa)), are a transit peptide targeting the chloroplast. VOC domains follow at residues 88–212 (RMLH…LLER) and 218–342 (PLCQ…FVDN). H91 contacts Zn(2+). R95 contributes to the substrate binding site. Residue E142 coordinates Zn(2+). Substrate contacts are provided by N146 and H160. Positions 160 and 208 each coordinate Zn(2+). The active-site Proton donor/acceptor is the E208.

This sequence belongs to the glyoxalase I family. Requires Zn(2+) as cofactor.

Its subcellular location is the plastid. It is found in the chloroplast stroma. It carries out the reaction (R)-S-lactoylglutathione = methylglyoxal + glutathione. It participates in secondary metabolite metabolism; methylglyoxal degradation; (R)-lactate from methylglyoxal: step 1/2. Catalyzes the conversion of hemimercaptal, formed from methylglyoxal and glutathione, to S-lactoylglutathione. This chain is Probable lactoylglutathione lyase, chloroplastic, found in Arabidopsis thaliana (Mouse-ear cress).